Here is a 715-residue protein sequence, read N- to C-terminus: Inducible lysine decarboxylase (715 aa).

The residue at position 367 (lysine 367) is an N6-(pyridoxal phosphate)lysine.

The protein belongs to the Orn/Lys/Arg decarboxylase class-I family. Homodecamer. Interacts with RavA. It depends on pyridoxal 5'-phosphate as a cofactor.

Its subcellular location is the cytoplasm. The enzyme catalyses L-lysine + H(+) = cadaverine + CO2. The protein is Inducible lysine decarboxylase (cadA) of Escherichia coli O157:H7.